Here is a 98-residue protein sequence, read N- to C-terminus: Large ribosomal subunit protein uL23 (98 aa).

Belongs to the universal ribosomal protein uL23 family. Part of the 50S ribosomal subunit. Contacts protein L29, and trigger factor when it is bound to the ribosome.

Its function is as follows. One of the early assembly proteins it binds 23S rRNA. One of the proteins that surrounds the polypeptide exit tunnel on the outside of the ribosome. Forms the main docking site for trigger factor binding to the ribosome. This is Large ribosomal subunit protein uL23 from Frankia casuarinae (strain DSM 45818 / CECT 9043 / HFP020203 / CcI3).